The chain runs to 236 residues: MDLQNQMKKAVAQAAVDQIQNGMILGLGSGSTAALMIEALAIKIKSGEIKDVVGVTTSFQGEVLASELGIPLKSLSSVSEIDLAIDGADEVDPKFQLIKGGGACHVQEKLVAALAKKFIVVVDSTKLVEKLNLDFKLPVEVLPSAWKQVQKTLINLGGEGNLRMAQKKAGPIVTDQGNLILDLTFRNGIDQPELLETQINNIPGVLENGLFVNLTDEVLVGKVESDVVGVESLKKI.

Substrate is bound by residues 29–32 (SGST), 86–89 (DGAD), and 99–102 (KGGG). The Proton acceptor role is filled by Glu108. Position 126 (Lys126) interacts with substrate.

Belongs to the ribose 5-phosphate isomerase family. As to quaternary structure, homodimer.

The catalysed reaction is aldehydo-D-ribose 5-phosphate = D-ribulose 5-phosphate. It participates in carbohydrate degradation; pentose phosphate pathway; D-ribose 5-phosphate from D-ribulose 5-phosphate (non-oxidative stage): step 1/1. Functionally, catalyzes the reversible conversion of ribose-5-phosphate to ribulose 5-phosphate. The chain is Ribose-5-phosphate isomerase A from Prochlorococcus marinus (strain NATL1A).